We begin with the raw amino-acid sequence, 591 residues long: PE-PGRS family protein PE_PGRS5 (591 aa).

Residues 1-93 (MSFVIAQPEM…AGAYASAEAA (93 aa)) enclose the PE domain. Positions 94-591 (NAGPNMLAAV…GGKGNNGNPG (498 aa)) are PGRS. Gly residues-rich tracts occupy residues 303-324 (GAGG…GNGG), 336-363 (ASGG…GHVS), 371-412 (GAGG…GDGG), 477-491 (SEAG…GGDG), 539-567 (AGTG…GVNG), and 579-591 (GATG…GNPG). Disordered stretches follow at residues 303-412 (GAGG…GDGG), 468-491 (GSVN…GGDG), and 539-591 (AGTG…GNPG).

The protein belongs to the mycobacterial PE family. PGRS subfamily. As to quaternary structure, interacts with human TLR4.

The protein resides in the host endoplasmic reticulum. Involved in endoplasmic reticulum (ER) stress-mediated apoptosis through human Toll-like receptor 4 (TLR4) signaling pathway. Localizes to the host ER, leading to ER stress, disruption of intracellular Ca(2+) homeostasis and increase of nitric oxide (NO) and reactive oxygen species (ROS) levels. Stress response results in caspase-8 activation and apoptosis of macrophage cells. Apoptosis may lead to dissemination of the bacteria, thereby spreading the disease. This is PE-PGRS family protein PE_PGRS5 from Mycobacterium tuberculosis (strain ATCC 25618 / H37Rv).